Reading from the N-terminus, the 102-residue chain is Large ribosomal subunit protein uL24 (102 aa).

The protein belongs to the universal ribosomal protein uL24 family. In terms of assembly, part of the 50S ribosomal subunit.

One of two assembly initiator proteins, it binds directly to the 5'-end of the 23S rRNA, where it nucleates assembly of the 50S subunit. Functionally, one of the proteins that surrounds the polypeptide exit tunnel on the outside of the subunit. The polypeptide is Large ribosomal subunit protein uL24 (Rhizobium etli (strain CIAT 652)).